We begin with the raw amino-acid sequence, 446 residues long: MTNMSQPPATEKKGVSDLLGFKIFGMPLPLYAFALITLLLSHFYNALPTDIVGGFAIMFIIGAIFGEIGKRLPIFNKYIGGAPVMIFLVAAYFVYAGIFTQKEIDAISNVMDKSNFLNLFIAVLITGAILSVNRRLLLKSLLGYIPTILMGIVGASIFGIAIGLVFGIPVDRIMMLYVLPIMGGGNGAGAVPLSEIYHSVTGRSREEYYSTAIAILTIANIFAIVFAAVLDIIGKKHTWLSGEGELVRKASFKVEEDEKTGQITHRETAVGLVLSTTCFLLAYVVAKKILPSIGGVAIHYFAWMVLIVAALNASGLCSPEIKAGAKRLSDFFSKQLLWVLMVGVGVCYTDLQEIINAITFANVVIAAIIVIGAVLGAAIGGWLMGFFPIESAITAGLCMANRGGSGDLEVLSACNRMNLISYAQISSRLGGGIVLVIASIVFGMMI.

Residues 1–27 are Cytoplasmic-facing; it reads MTNMSQPPATEKKGVSDLLGFKIFGMP. Residues 28-44 form a helical membrane-spanning segment; the sequence is LPLYAFALITLLLSHFY. Residues 45–50 lie on the Periplasmic side of the membrane; that stretch reads NALPTD. A helical membrane pass occupies residues 51–71; it reads IVGGFAIMFIIGAIFGEIGKR. The Cytoplasmic portion of the chain corresponds to 72 to 80; sequence LPIFNKYIG. The chain crosses the membrane as a helical span at residues 81-95; sequence GAPVMIFLVAAYFVY. The Periplasmic segment spans residues 96 to 115; that stretch reads AGIFTQKEIDAISNVMDKSN. The helical transmembrane segment at 116 to 130 threads the bilayer; that stretch reads FLNLFIAVLITGAIL. Residues 131-136 are Cytoplasmic-facing; sequence SVNRRL. A helical membrane pass occupies residues 137–166; sequence LLKSLLGYIPTILMGIVGASIFGIAIGLVF. The Periplasmic portion of the chain corresponds to 167 to 181; the sequence is GIPVDRIMMLYVLPI. Ile181 and Gly183 together coordinate Na(+). The segment at residues 182–189 is an intramembrane region (helical); the sequence is MGGGNGAG. Asn186 and Gly187 together coordinate citrate. The Periplasmic segment spans residues 190–212; the sequence is AVPLSEIYHSVTGRSREEYYSTA. Residues 213 to 233 traverse the membrane as a helical segment; the sequence is IAILTIANIFAIVFAAVLDII. Residues 234–264 lie on the Cytoplasmic side of the membrane; sequence GKKHTWLSGEGELVRKASFKVEEDEKTGQIT. The chain crosses the membrane as a helical span at residues 265–287; the sequence is HRETAVGLVLSTTCFLLAYVVAK. At 288–299 the chain is on the periplasmic side; sequence KILPSIGGVAIH. Residues 300-315 traverse the membrane as a helical segment; sequence YFAWMVLIVAALNASG. Residues 316-327 lie on the Cytoplasmic side of the membrane; the sequence is LCSPEIKAGAKR. Residues 328–351 traverse the membrane as a helical segment; sequence LSDFFSKQLLWVLMVGVGVCYTDL. At 352–359 the chain is on the periplasmic side; that stretch reads QEIINAIT. The chain crosses the membrane as a helical span at residues 360-381; sequence FANVVIAAIIVIGAVLGAAIGG. Residues 382 to 398 are Cytoplasmic-facing; that stretch reads WLMGFFPIESAITAGLC. Na(+) is bound by residues Met399 and Asn401. An intramembrane region (helical) is located at residues 399-406; the sequence is MANRGGSG. Citrate contacts are provided by Arg402, Gly404, and Ser405. The Cytoplasmic segment spans residues 407-416; that stretch reads DLEVLSACNR. Residues 417 to 438 traverse the membrane as a helical segment; that stretch reads MNLISYAQISSRLGGGIVLVIA. Residue Arg428 participates in citrate binding. The Periplasmic segment spans residues 439–446; it reads SIVFGMMI.

It belongs to the 2-hydroxycarboxylate transporter (2-HCT) (TC 2.A.24) family. As to quaternary structure, homodimer.

The protein resides in the cell inner membrane. It carries out the reaction citrate(out) + 2 Na(+)(out) = citrate(in) + 2 Na(+)(in). Its activity is regulated as follows. In the absence of Na(+), transport is inhibited by the thiol reagents N-ethylmaleimide (NEM) and the methanethiosulfonate (MTS) derivatives MTSEA, MTSET and MTSES. However, inactivation by NEM, MTSES and MTSET is prevented by the presence of Na(+). In the absence of Na(+), the substrate citrate has no effect on the inactivation by permeable or impermeable thiol reagents. In contrast, when subsaturating concentrations of Na(+) are present, citrate significantly reduces inactivation, suggesting ordered binding of the substrate and co-ion; citrate is bound after Na(+). The membrane impermeable bulky maleimide AmdiS does not inactivate the transporter in right-side-out membrane vesicles. The apparent affinity for Na(+) decreases with increasing proton concentration. Protons cannot replace Na(+) in the translocation step but the decrease in apparent affinity for Na(+) towards lower pH suggests that protons can compete with Na(+) for the cation-binding sites. In terms of biological role, secondary active transporter that catalyzes the uptake of citrate across the membrane with the concomitant uptake of sodium. There are conflicting data regarding exact substrate stoichiometry: the sodium/citrate stoichiometry was predicted to be 1, but the latest studies suggest that CitS transports citrate in symport with 2 sodium ions. Transports citrate as a divalent citrate anion, H-citrate(2-). Shows narrow substrate specificity and is very specific, transporting only citrate and to a low extent citromalate. Symport of Na(+) is absolutely required in the range pH 5-7 because no uptake can be detected in the absence of Na(+). Lithium can replace Na(+) in the symport reaction but it takes about a 200-fold higher concentration of Li(+) over Na(+) to achieve the same rate of uptake. This is Citrate/sodium symporter from Klebsiella pneumoniae.